The following is a 399-amino-acid chain: MTKKRHLFTSESVTEGHPDKICDQISDSILDAILAKDANARVACETTVTTGLVLVAGEITTSTYVDIPKIVRETIQGIGYTRAKYGFDAETCAVLTSIDEQSADIAMGVDQALEAREGQMTDAEIEAIGAGDQGLMFGFACNETQELMPLPISLAHKLARRLTEVRKDDTLSYLRPDGKTQVTVEYDENGKPVRVDTIVISTQHHPDVTWEEIDRDLKEHVIKAVVPAELMDGETKFFINPTGRFVIGGPQGDAGLTGRKIIVDTYGGYARHGGGAFSGKDATKVDRSAAYAARYVAKNIVAAGLADKAEVQLAYAIGVAQPVSISVDTLGTGKVSEDVLVELVRNNFDLRPAGIIKMLDLRRPIYKQTAAYGHFGRTDVDLTWERTDKAATLKEQAGL.

H17 is an ATP binding site. D19 is a binding site for Mg(2+). E45 contacts K(+). E58 and Q101 together coordinate L-methionine. The interval 101–111 is flexible loop; it reads QSADIAMGVDQ. ATP is bound by residues 177 to 179, 244 to 245, D253, 259 to 260, A276, and K280; these read DGK, RF, and RK. D253 serves as a coordination point for L-methionine. Position 284 (K284) interacts with L-methionine.

The protein belongs to the AdoMet synthase family. Homotetramer; dimer of dimers. The cofactor is Mg(2+). K(+) serves as cofactor.

It is found in the cytoplasm. The enzyme catalyses L-methionine + ATP + H2O = S-adenosyl-L-methionine + phosphate + diphosphate. The protein operates within amino-acid biosynthesis; S-adenosyl-L-methionine biosynthesis; S-adenosyl-L-methionine from L-methionine: step 1/1. Catalyzes the formation of S-adenosylmethionine (AdoMet) from methionine and ATP. The overall synthetic reaction is composed of two sequential steps, AdoMet formation and the subsequent tripolyphosphate hydrolysis which occurs prior to release of AdoMet from the enzyme. The sequence is that of S-adenosylmethionine synthase from Bacillus mycoides (strain KBAB4) (Bacillus weihenstephanensis).